The following is a 410-amino-acid chain: Cell division protein FtsZ (410 aa).

GTP contacts are provided by residues 22 to 26 (GGGGN), 109 to 111 (GTG), glutamate 140, arginine 144, and aspartate 188. A disordered region spans residues 318–410 (ESKKDRKPHR…STPPFFRRKR (93 aa)). The span at 330–344 (RQAVQPMQQTTQSVE) shows a compositional bias: polar residues. Residues 360–398 (WDIRREQNTRPKVDESSLEQVDKKEFDTFHREEPNHNDD) show a composition bias toward basic and acidic residues.

Belongs to the FtsZ family. In terms of assembly, homodimer. Polymerizes to form a dynamic ring structure in a strictly GTP-dependent manner. Interacts directly with several other division proteins.

It localises to the cytoplasm. In terms of biological role, essential cell division protein that forms a contractile ring structure (Z ring) at the future cell division site. The regulation of the ring assembly controls the timing and the location of cell division. One of the functions of the FtsZ ring is to recruit other cell division proteins to the septum to produce a new cell wall between the dividing cells. Binds GTP and shows GTPase activity. This Enterococcus faecalis (strain ATCC 700802 / V583) protein is Cell division protein FtsZ.